Here is a 225-residue protein sequence, read N- to C-terminus: Chromosome partition protein MukE (225 aa).

Positions 197-225 (RDGEAMPIENHLQLNDETEENQPDSGEEE) are disordered. A compositionally biased stretch (acidic residues) spans 212–225 (DETEENQPDSGEEE).

It belongs to the MukE family. Interacts, and probably forms a ternary complex, with MukF and MukB. The complex formation is stimulated by calcium or magnesium.

It is found in the cytoplasm. The protein resides in the nucleoid. Its function is as follows. Involved in chromosome condensation, segregation and cell cycle progression. May participate in facilitating chromosome segregation by condensation DNA from both sides of a centrally located replisome during cell division. Probably acts via its interaction with MukB and MukF. The chain is Chromosome partition protein MukE from Escherichia coli O157:H7.